Here is a 556-residue protein sequence, read N- to C-terminus: Urocanate hydratase (556 aa).

Residues 52 to 53 (GG), glutamine 130, 176 to 178 (GMG), glutamate 196, arginine 201, 242 to 243 (NA), 263 to 267 (QTSAH), 273 to 274 (YL), and tyrosine 322 contribute to the NAD(+) site. Cysteine 410 is an active-site residue. NAD(+) is bound at residue glycine 492.

This sequence belongs to the urocanase family. Requires NAD(+) as cofactor.

The protein localises to the cytoplasm. The catalysed reaction is 4-imidazolone-5-propanoate = trans-urocanate + H2O. It participates in amino-acid degradation; L-histidine degradation into L-glutamate; N-formimidoyl-L-glutamate from L-histidine: step 2/3. In terms of biological role, catalyzes the conversion of urocanate to 4-imidazolone-5-propionate. In Bradyrhizobium sp. (strain BTAi1 / ATCC BAA-1182), this protein is Urocanate hydratase.